Consider the following 95-residue polypeptide: Secreted RxLR effector protein 20 (95 aa).

The signal sequence occupies residues 1–20; it reads MQSPYIILFALVTLLGSISG. Residues 47–50 carry the RxLR motif; sequence RLLR.

This sequence belongs to the RxLR effector family.

Its subcellular location is the secreted. The protein localises to the host nucleus. The protein resides in the host cytoplasm. Functionally, secreted effector that partially suppresses the host cell death induced by cell death-inducing proteins. The polypeptide is Secreted RxLR effector protein 20 (Plasmopara viticola (Downy mildew of grapevine)).